We begin with the raw amino-acid sequence, 315 residues long: uncharacterized protein (315 aa).

Belongs to the asfivirus C315R family.

This is an uncharacterized protein from Ornithodoros (relapsing fever ticks).